A 607-amino-acid chain; its full sequence is ATP-dependent RNA helicase DBP6 (607 aa).

Residues 1–83 form a disordered region; it reads MFAARFDPSR…GTGEADKRHQ (83 aa). Residues 34-59 are compositionally biased toward acidic residues; the sequence is QDESESEMSSAESEDEAMQLDDEEEV. Residues 60 to 69 show a composition bias toward basic and acidic residues; the sequence is VDSKGKENHG. The short motif at 184-192 is the Q motif element; it reads AFPIQTALL. A Helicase ATP-binding domain is found at 208–388; the sequence is RYYTRKVGDI…DLQLHNPKLF (181 aa). 221–228 contacts ATP; sequence ASTGSGKT. The DEAD box signature appears at 328-331; the sequence is DEAD. Residues 419-578 form the Helicase C-terminal domain; it reads ILLRLLPLLS…GSHLFFDEEQ (160 aa).

It belongs to the DEAD box helicase family. DDX51/DBP6 subfamily. As to quaternary structure, associated with pre-ribosomal particles.

It is found in the nucleus. Its subcellular location is the nucleolus. The catalysed reaction is ATP + H2O = ADP + phosphate + H(+). ATP-binding RNA helicase involved in the biogenesis of 60S ribosomal subunits and is required for the normal formation of 25S and 5.8S rRNAs. The polypeptide is ATP-dependent RNA helicase DBP6 (DBP6) (Eremothecium gossypii (strain ATCC 10895 / CBS 109.51 / FGSC 9923 / NRRL Y-1056) (Yeast)).